A 195-amino-acid polypeptide reads, in one-letter code: Probable septum site-determining protein MinC (195 aa).

This sequence belongs to the MinC family. In terms of assembly, interacts with MinD and FtsZ.

Cell division inhibitor that blocks the formation of polar Z ring septums. Rapidly oscillates between the poles of the cell to destabilize FtsZ filaments that have formed before they mature into polar Z rings. Prevents FtsZ polymerization. This chain is Probable septum site-determining protein MinC, found in Helicobacter pylori (strain G27).